Consider the following 517-residue polypeptide: Crotonobetaine/carnitine--CoA ligase (517 aa).

It belongs to the ATP-dependent AMP-binding enzyme family.

The catalysed reaction is 4-(trimethylamino)butanoate + ATP + CoA = 4-(trimethylamino)butanoyl-CoA + AMP + diphosphate. The enzyme catalyses crotonobetaine + ATP + CoA = crotonobetainyl-CoA + AMP + diphosphate. It catalyses the reaction (R)-carnitine + ATP + CoA = (R)-carnitinyl-CoA + AMP + diphosphate. It functions in the pathway amine and polyamine metabolism; carnitine metabolism. Catalyzes the transfer of CoA to carnitine, generating the initial carnitinyl-CoA needed for the CaiB reaction cycle. Also has activity toward crotonobetaine and gamma-butyrobetaine. The protein is Crotonobetaine/carnitine--CoA ligase of Shigella dysenteriae serotype 1 (strain Sd197).